The chain runs to 486 residues: ATP synthase subunit beta (486 aa).

Gly-167–Thr-174 serves as a coordination point for ATP.

This sequence belongs to the ATPase alpha/beta chains family. In terms of assembly, F-type ATPases have 2 components, CF(1) - the catalytic core - and CF(0) - the membrane proton channel. CF(1) has five subunits: alpha(3), beta(3), gamma(1), delta(1), epsilon(1). CF(0) has three main subunits: a(1), b(2) and c(9-12). The alpha and beta chains form an alternating ring which encloses part of the gamma chain. CF(1) is attached to CF(0) by a central stalk formed by the gamma and epsilon chains, while a peripheral stalk is formed by the delta and b chains.

It is found in the cell inner membrane. The enzyme catalyses ATP + H2O + 4 H(+)(in) = ADP + phosphate + 5 H(+)(out). Functionally, produces ATP from ADP in the presence of a proton gradient across the membrane. The catalytic sites are hosted primarily by the beta subunits. The chain is ATP synthase subunit beta from Anaplasma marginale (strain St. Maries).